Reading from the N-terminus, the 260-residue chain is Exosome complex component Rrp4 (260 aa).

The S1 motif domain occupies 59–128 (NDVVIGIVIV…NSMKVELALR (70 aa)). Positions 136 to 194 (KTGQIVEVEPVKVPRVIGHGGSMISMLKKETNCSIFVGQNGRIWIDGKDDDVELLSKAL) constitute a KH domain.

It belongs to the RRP4 family. In terms of assembly, component of the archaeal exosome complex. Forms a trimer of Rrp4 and/or Csl4 subunits. The trimer associates with a hexameric ring-like arrangement composed of 3 Rrp41-Rrp42 heterodimers.

It localises to the cytoplasm. Functionally, non-catalytic component of the exosome, which is a complex involved in RNA degradation. Increases the RNA binding and the efficiency of RNA degradation. Confers strong poly(A) specificity to the exosome. This is Exosome complex component Rrp4 from Methanosarcina barkeri (strain Fusaro / DSM 804).